The following is a 449-amino-acid chain: UDP-N-acetylmuramoylalanine--D-glutamate ligase (449 aa).

117 to 123 (GSNGKTT) serves as a coordination point for ATP.

It belongs to the MurCDEF family.

Its subcellular location is the cytoplasm. The catalysed reaction is UDP-N-acetyl-alpha-D-muramoyl-L-alanine + D-glutamate + ATP = UDP-N-acetyl-alpha-D-muramoyl-L-alanyl-D-glutamate + ADP + phosphate + H(+). Its pathway is cell wall biogenesis; peptidoglycan biosynthesis. Its function is as follows. Cell wall formation. Catalyzes the addition of glutamate to the nucleotide precursor UDP-N-acetylmuramoyl-L-alanine (UMA). This Exiguobacterium sibiricum (strain DSM 17290 / CCUG 55495 / CIP 109462 / JCM 13490 / 255-15) protein is UDP-N-acetylmuramoylalanine--D-glutamate ligase.